The following is a 660-amino-acid chain: UvrABC system protein B (660 aa).

Positions 24–177 (KGFKEGNQFE…DDLARALIDL (154 aa)) constitute a Helicase ATP-binding domain. 37-44 (GVTGSGKT) serves as a coordination point for ATP. A Beta-hairpin motif is present at residues 90 to 113 (YYDYYQPEAYVPQSDTYIAKDSSV). The Helicase C-terminal domain maps to 428–594 (QIDDLVSEVN…TIQKSVRDLI (167 aa)). The UVR domain occupies 620-655 (EKHIADIEKKMKKAAAELNFEAAAEYRDKLIMLKNT).

The protein belongs to the UvrB family. Forms a heterotetramer with UvrA during the search for lesions. Interacts with UvrC in an incision complex.

It is found in the cytoplasm. The UvrABC repair system catalyzes the recognition and processing of DNA lesions. A damage recognition complex composed of 2 UvrA and 2 UvrB subunits scans DNA for abnormalities. Upon binding of the UvrA(2)B(2) complex to a putative damaged site, the DNA wraps around one UvrB monomer. DNA wrap is dependent on ATP binding by UvrB and probably causes local melting of the DNA helix, facilitating insertion of UvrB beta-hairpin between the DNA strands. Then UvrB probes one DNA strand for the presence of a lesion. If a lesion is found the UvrA subunits dissociate and the UvrB-DNA preincision complex is formed. This complex is subsequently bound by UvrC and the second UvrB is released. If no lesion is found, the DNA wraps around the other UvrB subunit that will check the other stand for damage. The chain is UvrABC system protein B from Agathobacter rectalis (strain ATCC 33656 / DSM 3377 / JCM 17463 / KCTC 5835 / VPI 0990) (Eubacterium rectale).